The following is a 461-amino-acid chain: MLKIFNTLSRQKEEFKPIHAGEVGMYVCGVTIYDLCHIGHGRTFVCFDVVARYLRYLGYRLKYVRNVTDVDDKIIKRALENQESCEQLTERMLAEMHRDFDALNIARPDVEPRATHHIAEIIALVEQLIARDHAYVASNGDVMFAVDTDPDYGVLSRQDLEQLQAGARVEVADVKRNPMDFVLWKMSKPGEPSWPSPWGEGRPGWHIECSAMNCKQLGSHFDIHGGGSDLMFPHHENEIAQSTCAHDGAYVNCWMHSGMVMIDREKMSKSLGNFFTIRDVLAHYDAETVRYFLMSGHYRSQLNYSEENLKQARAALERLYTALRGTDVAAQPTADETFTTRFRAAMDDDFNTPEAYSVLFDMAREINRLKGEDMAQANALAAQMRGLAHVLGLLEQTPEHFLQSGAAAGDDEVAQIEALIRQRNDARAAKAWALADEARDSLNAMGIVLEDGPQGTTWRRK.

Zn(2+) is bound at residue Cys-28. Residues 30–40 (VTIYDLCHIGH) carry the 'HIGH' region motif. Zn(2+)-binding residues include Cys-209, His-234, and Glu-238. Positions 266–270 (KMSKS) match the 'KMSKS' region motif. Lys-269 is an ATP binding site.

It belongs to the class-I aminoacyl-tRNA synthetase family. As to quaternary structure, monomer. Requires Zn(2+) as cofactor.

It is found in the cytoplasm. It carries out the reaction tRNA(Cys) + L-cysteine + ATP = L-cysteinyl-tRNA(Cys) + AMP + diphosphate. The protein is Cysteine--tRNA ligase of Edwardsiella ictaluri (strain 93-146).